Here is a 142-residue protein sequence, read N- to C-terminus: Hemoglobin subunit alpha-1 (142 aa).

Residues 2–142 form the Globin domain; it reads VLSPADKTNI…VSTVLTSKYR (141 aa). Position 59 (H59) interacts with O2. Heme b is bound at residue H88.

It belongs to the globin family. As to quaternary structure, heterotetramer of two alpha chains and two beta chains. Red blood cells.

Functionally, involved in oxygen transport from the lung to the various peripheral tissues. This Arctocephalus galapagoensis (Galapagoes fur seal) protein is Hemoglobin subunit alpha-1.